A 291-amino-acid polypeptide reads, in one-letter code: N-acetylmannosamine kinase (291 aa).

Residues 5–12 (AIDIGGTK) and 132–139 (GVGGGVVC) contribute to the ATP site. Histidine 156, cysteine 166, cysteine 168, and cysteine 173 together coordinate Zn(2+).

The protein belongs to the ROK (NagC/XylR) family. NanK subfamily. Homodimer.

The catalysed reaction is an N-acyl-D-mannosamine + ATP = an N-acyl-D-mannosamine 6-phosphate + ADP + H(+). Its pathway is amino-sugar metabolism; N-acetylneuraminate degradation; D-fructose 6-phosphate from N-acetylneuraminate: step 2/5. Its function is as follows. Catalyzes the phosphorylation of N-acetylmannosamine (ManNAc) to ManNAc-6-P. In Salmonella paratyphi B (strain ATCC BAA-1250 / SPB7), this protein is N-acetylmannosamine kinase.